Reading from the N-terminus, the 145-residue chain is MDHYLKKLQDIYTKLEGHPFLFSPSKTNEKEFITLLNQALASTQLYRSIQQLFLTMYKLDPIGFINYIKTSKQEYLCLLINPKLVTKFLKITSFKIYINFRLKTFYISPNKYNNFYTAPSEEKTNHLLKEEKTWAKIVEEGGEES.

It belongs to the asfivirus K145R family.

Its subcellular location is the virion. This is an uncharacterized protein from Ornithodoros (relapsing fever ticks).